We begin with the raw amino-acid sequence, 347 residues long: Uroporphyrinogen decarboxylase (347 aa).

Substrate-binding positions include 24–28, Asp-74, Tyr-145, Ser-200, and His-315; that span reads RQAGR.

It belongs to the uroporphyrinogen decarboxylase family. As to quaternary structure, homodimer.

Its subcellular location is the cytoplasm. It carries out the reaction uroporphyrinogen III + 4 H(+) = coproporphyrinogen III + 4 CO2. It functions in the pathway porphyrin-containing compound metabolism; protoporphyrin-IX biosynthesis; coproporphyrinogen-III from 5-aminolevulinate: step 4/4. In terms of biological role, catalyzes the decarboxylation of four acetate groups of uroporphyrinogen-III to yield coproporphyrinogen-III. The sequence is that of Uroporphyrinogen decarboxylase from Hydrogenobaculum sp. (strain Y04AAS1).